A 142-amino-acid polypeptide reads, in one-letter code: Hemoglobin subunit beta-C (142 aa).

One can recognise a Globin domain in the interval 2–142; sequence PNKALITGFW…VASALAHRYH (141 aa). 2 residues coordinate heme b: histidine 59 and histidine 88.

Belongs to the globin family. As to quaternary structure, heterotetramer of two alpha chains and two beta chains. In terms of tissue distribution, red blood cells.

Involved in oxygen transport from the lung to the various peripheral tissues. In Ovis aries (Sheep), this protein is Hemoglobin subunit beta-C (HBBC).